The primary structure comprises 309 residues: Malate dehydrogenase (309 aa).

NAD(+) contacts are provided by residues 8–13 (GAGLVG) and Asp33. Substrate is bound by residues Arg82 and Arg88. NAD(+)-binding positions include Asn95 and 118–120 (VSN). Residues Asn120 and Arg151 each coordinate substrate. The Proton acceptor role is filled by His175.

It belongs to the LDH/MDH superfamily. MDH type 3 family.

It catalyses the reaction (S)-malate + NAD(+) = oxaloacetate + NADH + H(+). Catalyzes the reversible oxidation of malate to oxaloacetate. The protein is Malate dehydrogenase of Pseudomonas putida (strain GB-1).